The chain runs to 539 residues: Chaperonin GroEL (539 aa).

ATP-binding positions include 30 to 33 (TLGP), lysine 51, 87 to 91 (DGTTT), glycine 415, 479 to 481 (NAA), and aspartate 495.

The protein belongs to the chaperonin (HSP60) family. As to quaternary structure, forms a cylinder of 14 subunits composed of two heptameric rings stacked back-to-back. Interacts with the co-chaperonin GroES.

Its subcellular location is the cytoplasm. The catalysed reaction is ATP + H2O + a folded polypeptide = ADP + phosphate + an unfolded polypeptide.. Its function is as follows. Together with its co-chaperonin GroES, plays an essential role in assisting protein folding. The GroEL-GroES system forms a nano-cage that allows encapsulation of the non-native substrate proteins and provides a physical environment optimized to promote and accelerate protein folding. The protein is Chaperonin GroEL of Enterobacter asburiae.